Here is a 419-residue protein sequence, read N- to C-terminus: NF-kappa-B essential modulator (419 aa).

Residues 1-48 (MSRPPWKSPLCEMVQPSGSPAGDQDMLGEESSLGKPAMLHVPSEQGTP) form a disordered region. A required for interaction with and ubiquitination by MARCHF2 region spans residues 1–197 (MSRPPWKSPL…REALEQRHSV (197 aa)). Ser-31 and Ser-43 each carry phosphoserine; by IKKB. An interaction with CHUK/IKBKB region spans residues 44–111 (EQGTPETFQR…DLVVRLSLEK (68 aa)). A coiled-coil region spans residues 49–353 (ETFQRCLEEN…KTSCQESARI (305 aa)). Ser-68 is modified (phosphoserine). Glycyl lysine isopeptide (Lys-Gly) (interchain with G-Cter in ubiquitin) cross-links involve residues Lys-111, Lys-139, Lys-143, Lys-226, Lys-246, and Lys-264. An interaction with TANK region spans residues 150 to 257 (LGELQESQSR…SMVSSERNRG (108 aa)). The ubiquitin-binding (UBAN) stretch occupies residues 242 to 350 (DNHMKSSMVS…SRLKTSCQES (109 aa)). Residues 246–365 (KSSMVSSERN…MRKRHVEVSQ (120 aa)) form a self-association region. Residues 251-419 (SSERNRGLQL…LQIHVMECIE (169 aa)) are required for interaction with TNFAIP3. Lys-277 is covalently cross-linked (Glycyl lysine isopeptide (Lys-Gly) (interchain with G-Cter in SUMO); alternate). Lys-277 participates in a covalent cross-link: Glycyl lysine isopeptide (Lys-Gly) (interchain with G-Cter in ubiquitin); alternate. Residues Lys-283, Lys-285, Lys-292, and Lys-302 each participate in a glycyl lysine isopeptide (Lys-Gly) (interchain with G-Cter in ubiquitin) cross-link. Lys-309 is covalently cross-linked (Glycyl lysine isopeptide (Lys-Gly) (interchain with G-Cter in SUMO); alternate). Lys-309 participates in a covalent cross-link: Glycyl lysine isopeptide (Lys-Gly) (interchain with G-Cter in ubiquitin); alternate. Glycyl lysine isopeptide (Lys-Gly) (interchain with G-Cter in ubiquitin) cross-links involve residues Lys-321, Lys-325, and Lys-326. A leucine-zipper region spans residues 322-343 (LAEKKEFLQEQLEQLQREYSRL). Residues 356–394 (MRKRHVEVSQPPLAPGPAHHSFHLNPSSQRRSPPDEPPK) form a disordered region. Ser-376 is modified (phosphoserine; by IKKB). The interval 382-419 (SSQRRSPPDEPPKFCCPKCQYQAPDIDTLQIHVMECIE) is interaction with CYLD. Ser-387 is modified (phosphoserine). The segment at 389-419 (PDEPPKFCCPKCQYQAPDIDTLQIHVMECIE) adopts a CCHC NOA-type zinc-finger fold. Residue Cys-397 participates in Zn(2+) binding. A Glycyl lysine isopeptide (Lys-Gly) (interchain with G-Cter in ubiquitin) cross-link involves residue Lys-399. Zn(2+) is bound by residues Cys-400, His-413, and Cys-417.

As to quaternary structure, homodimer; disulfide-linked. Component of the I-kappa-B-kinase (IKK) core complex consisting of CHUK, IKBKB and IKBKG; probably four alpha/CHUK-beta/IKBKB dimers are associated with four gamma/IKBKG subunits. The IKK core complex seems to associate with regulatory or adapter proteins to form a IKK-signalosome holo-complex. The IKK complex associates with TERF2IP/RAP1, leading to promote IKK-mediated phosphorylation of RELA/p65. Part of a complex composed of NCOA2, NCOA3, CHUK/IKKA, IKBKB, IKBKG and CREBBP. Interacts with COPS3, CYLD, NALP2, TRPC4AP and PIDD1. Interacts with ATM; the complex is exported from the nucleus. Interacts with TRAF6. Interacts with IKBKE. Interacts with TANK; the interaction is enhanced by IKBKE and TBK1. Part of a ternary complex consisting of TANK, IKBKB and IKBKG. Interacts with ZFAND5. Interacts with RIPK2. Interacts with TNIP1 and TNFAIP3; TNIP1 facilitates the TNFAIP3-mediated de-ubiquitination of IKBKG. Interacts with TNFAIP3; the interaction is induced by TNF stimulation and by polyubiquitin. Binds (via UBAN region) polyubiquitin; binds both 'Lys-63'-linked and linear polyubiquitin, with higher affinity for linear ubiquitin. Interacts with NLRP10. Interacts with TANK; this interaction increases in response to DNA damage. Interacts with USP10; this interaction increases in response to DNA damage. Interacts with ZC3H12A; this interaction increases in response to DNA damage. Interacts with IFIT5; the interaction synergizes the recruitment of IKK to MAP3K7 and enhances IKK phosphorylation. Interacts with TRIM29; this interaction induces IKBKG/NEMO ubiquitination and proteolytic degradation. Interacts with TRIM13; this interaction leads to IKBKG/NEMO ubiquitination. Interacts with ARFIP2. Interacts with RIPK1. Interacts with (ubiquitinated) BCL10; interaction with polyubiquitinated BCL10 via both 'Lys-63'-linked and linear ubiquitin is required for TCR-induced NF-kappa-B activation. Interacts with MARCHF2; during the late stages of macrophage viral and bacterial infection; the interaction leads to ubiquitination and degradation of IKBKG/NEMO. Post-translationally, phosphorylation at Ser-68 attenuates aminoterminal homodimerization. In terms of processing, polyubiquitinated on Lys-285 through 'Lys-63'; the ubiquitination is mediated downstream of NOD2 and RIPK2 and probably plays a role in signaling by facilitating interactions with ubiquitin domain-containing proteins and activates the NF-kappa-B pathway. Polyubiquitinated on Lys-399 through 'Lys-63'; the ubiquitination is mediated by BCL10, MALT1 and TRAF6 and probably plays a role in signaling by facilitating interactions with ubiquitin domain-containing proteins and activates the NF-kappa-B pathway. Monoubiquitinated on Lys-277 and Lys-309; promotes nuclear export. Polyubiquitinated through 'Lys-27' by TRIM23; involved in antiviral innate and inflammatory responses. Linear polyubiquitinated on Lys-111, Lys-143, Lys-226, Lys-246, Lys-264, Lys-277, Lys-285, Lys-292, Lys-302, Lys-309 and Lys-326; the head-to-tail polyubiquitination is mediated by the LUBAC complex and plays a key role in NF-kappa-B activation. Deubiquitinated by USP10 in a TANK-dependent and -independent manner, leading to the negative regulation of NF-kappa-B signaling upon DNA damage. Ubiquitinated at Lys-326 by MARCHF2 following bacterial and viral infection which leads to its degradation. Polyubiquitinated via 'Lys-29'-linked ubiquitin; leading to lysosomal degradation. Sumoylated on Lys-277 and Lys-309 with SUMO1. Post-translationally, neddylated by TRIM40, resulting in stabilization of NFKBIA and down-regulation of NF-kappa-B activity.

The protein resides in the cytoplasm. Its subcellular location is the nucleus. In terms of biological role, regulatory subunit of the IKK core complex which phosphorylates inhibitors of NF-kappa-B thus leading to the dissociation of the inhibitor/NF-kappa-B complex and ultimately the degradation of the inhibitor. Its binding to scaffolding polyubiquitin plays a key role in IKK activation by multiple signaling receptor pathways. Can recognize and bind both 'Lys-63'-linked and linear polyubiquitin upon cell stimulation, with a much highr affinity for linear polyubiquitin. Could be implicated in NF-kappa-B-mediated protection from cytokine toxicity. Essential for viral activation of IRF3. Involved in TLR3- and IFIH1-mediated antiviral innate response; this function requires 'Lys-27'-linked polyubiquitination. This Bos taurus (Bovine) protein is NF-kappa-B essential modulator (IKBKG).